The sequence spans 280 residues: Polyamine aminopropyltransferase 2 (280 aa).

The PABS domain maps to 2–237; the sequence is ELWLDEALEL…GIIGFTYCSK (236 aa). An S-methyl-5'-thioadenosine-binding site is contributed by Gln-33. Spermidine-binding residues include His-64 and Asp-88. Residues Glu-108 and 139-140 each bind S-methyl-5'-thioadenosine; that span reads DG. Asp-157 acts as the Proton acceptor in catalysis. A spermidine-binding site is contributed by 157–160; the sequence is DSSD. Pro-164 is a binding site for S-methyl-5'-thioadenosine.

Belongs to the spermidine/spermine synthase family. As to quaternary structure, homodimer or homotetramer.

The protein resides in the cytoplasm. It carries out the reaction S-adenosyl 3-(methylsulfanyl)propylamine + putrescine = S-methyl-5'-thioadenosine + spermidine + H(+). It functions in the pathway amine and polyamine biosynthesis; spermidine biosynthesis; spermidine from putrescine: step 1/1. In terms of biological role, catalyzes the irreversible transfer of a propylamine group from the amino donor S-adenosylmethioninamine (decarboxy-AdoMet) to putrescine (1,4-diaminobutane) to yield spermidine. The protein is Polyamine aminopropyltransferase 2 of Leptospira interrogans serogroup Icterohaemorrhagiae serovar Lai (strain 56601).